A 360-amino-acid polypeptide reads, in one-letter code: 45 kDa calcium-binding protein (360 aa).

Residues 1 to 29 (MVSKQAFLFSLGSLYLSLLFVFLLMDVYA) form the signal peptide. Asparagine 33 is a glycosylation site (N-linked (GlcNAc...) asparagine). 5 consecutive EF-hand domains span residues 96 to 131 (RNRR…KTEE), 135 to 170 (EAVN…SKGF), 231 to 266 (MLKF…TVEN), 276 to 311 (WVRD…MNEY), and 312 to 347 (NALN…FTGS). Ca(2+) contacts are provided by aspartate 109, asparagine 111, aspartate 113, glutamine 115, glutamate 120, aspartate 148, aspartate 150, aspartate 152, histidine 154, glutamate 159, aspartate 244, aspartate 246, aspartate 248, lysine 250, glutamate 255, aspartate 289, asparagine 291, aspartate 293, glutamate 300, aspartate 325, asparagine 327, aspartate 329, histidine 331, and glutamate 336.

This sequence belongs to the CREC family.

It localises to the golgi apparatus lumen. Its function is as follows. May regulate calcium-dependent activities in the endoplasmic reticulum lumen or post-ER compartment. The chain is 45 kDa calcium-binding protein (sdf4) from Xenopus tropicalis (Western clawed frog).